Consider the following 741-residue polypeptide: Exostosin-1b (741 aa).

Over M1 to Y7 the chain is Cytoplasmic. Residues L8–V28 form a helical; Signal-anchor for type II membrane protein membrane-spanning segment. The Lumenal portion of the chain corresponds to P29–L741. N-linked (GlcNAc...) asparagine glycans are attached at residues N84 and N325. R435, R544, D560, E561, D562, E648, D649, and R696 together coordinate UDP-N-acetyl-alpha-D-glucosamine. Position 562 (D562) interacts with Mn(2+). An intrachain disulfide couples C647 to C699. The active site involves D649.

It belongs to the glycosyltransferase 47 family. Mn(2+) serves as cofactor.

The protein localises to the endoplasmic reticulum membrane. The catalysed reaction is 3-O-{[(1-&gt;4)-beta-D-GlcA-(1-&gt;4)-alpha-D-GlcNAc](n)-(1-&gt;4)-beta-D-GlcA-(1-&gt;3)-beta-D-Gal-(1-&gt;3)-beta-D-Gal-(1-&gt;4)-beta-D-Xyl}-L-seryl-[protein] + UDP-N-acetyl-alpha-D-glucosamine = 3-O-{alpha-D-GlcNAc-[(1-&gt;4)-beta-D-GlcA-(1-&gt;4)-alpha-D-GlcNAc](n)-(1-&gt;4)-beta-D-GlcA-(1-&gt;3)-beta-D-Gal-(1-&gt;3)-beta-D-Gal-(1-&gt;4)-beta-D-Xyl}-L-seryl-[protein] + UDP + H(+). The enzyme catalyses 3-O-{alpha-D-GlcNAc-[(1-&gt;4)-beta-D-GlcA-(1-&gt;4)-alpha-D-GlcNAc](n)-(1-&gt;4)-beta-D-GlcA-(1-&gt;3)-beta-D-Gal-(1-&gt;3)-beta-D-Gal-(1-&gt;4)-beta-D-Xyl}-L-seryl-[protein] + UDP-alpha-D-glucuronate = 3-O-{[(1-&gt;4)-beta-D-GlcA-(1-&gt;4)-alpha-D-GlcNAc](n+1)-(1-&gt;4)-beta-D-GlcA-(1-&gt;3)-beta-D-Gal-(1-&gt;3)-beta-D-Gal-(1-&gt;4)-beta-D-Xyl}-L-seryl-[protein] + UDP + H(+). It functions in the pathway protein modification; protein glycosylation. Functionally, glycosyltransferase required for the biosynthesis of heparan-sulfate. This is Exostosin-1b (ext1b) from Danio rerio (Zebrafish).